The following is a 1461-amino-acid chain: DNA topoisomerase 2 (1461 aa).

Over residues 1-17 (MSESESDYFTDGSEDDF) the composition is skewed to acidic residues. The segment at 1 to 61 (MSESESDYFT…TPKPTNASET (61 aa)) is disordered. Over residues 41–52 (TNSTVSSSRSST) the composition is skewed to low complexity. ATP contacts are provided by residues Asn120, Asn149, 177-179 (SSN), and 190-197 (GRNGFGAK). The tract at residues 382 to 389 (SKKEKGKK) is interaction with DNA. 418 to 420 (QTK) contributes to the ATP binding site. The region spanning 498–614 (CTLILTEGLS…GLLDIPGFLL (117 aa)) is the Toprim domain. Mg(2+)-binding residues include Glu504, Asp583, and Asp585. The 475-residue stretch at 752 to 1226 (IPSVLDGFKP…SAKDLWNQDL (475 aa)) folds into the Topo IIA-type catalytic domain. The active-site O-(5'-phospho-DNA)-tyrosine intermediate is the Tyr842. The tract at residues 1024-1033 (KLVSSLSLAN) is interaction with DNA. Disordered stretches follow at residues 1122-1155 (DGKPIKSSEELLTGDDADEEEETQEQEGDEDVGN) and 1244-1461 (RESL…IVDE). A compositionally biased stretch (acidic residues) spans 1133–1153 (LTGDDADEEEETQEQEGDEDV). The segment covering 1251-1261 (GKKKSTKRRAK) has biased composition (basic residues). 2 stretches are compositionally biased toward basic and acidic residues: residues 1274-1283 (VKVEPKEKKS) and 1406-1417 (DKPEPKERRTRE). The span at 1434-1461 (DSDDEDEDEEDDIVMSDGDDDDDFIVDE) shows a compositional bias: acidic residues.

Belongs to the type II topoisomerase family. In terms of assembly, homodimer. It depends on Mg(2+) as a cofactor. Requires Mn(2+) as cofactor. Ca(2+) serves as cofactor.

The protein localises to the nucleus. The enzyme catalyses ATP-dependent breakage, passage and rejoining of double-stranded DNA.. Functionally, control of topological states of DNA by transient breakage and subsequent rejoining of DNA strands. Topoisomerase II makes double-strand breaks. This is DNA topoisomerase 2 (TOP2) from Candida albicans (Yeast).